The primary structure comprises 245 residues: 1-(5-phosphoribosyl)-5-[(5-phosphoribosylamino)methylideneamino] imidazole-4-carboxamide isomerase (245 aa).

The Proton acceptor role is filled by aspartate 7. The active-site Proton donor is the aspartate 129.

It belongs to the HisA/HisF family.

The protein resides in the cytoplasm. The catalysed reaction is 1-(5-phospho-beta-D-ribosyl)-5-[(5-phospho-beta-D-ribosylamino)methylideneamino]imidazole-4-carboxamide = 5-[(5-phospho-1-deoxy-D-ribulos-1-ylimino)methylamino]-1-(5-phospho-beta-D-ribosyl)imidazole-4-carboxamide. It functions in the pathway amino-acid biosynthesis; L-histidine biosynthesis; L-histidine from 5-phospho-alpha-D-ribose 1-diphosphate: step 4/9. This chain is 1-(5-phosphoribosyl)-5-[(5-phosphoribosylamino)methylideneamino] imidazole-4-carboxamide isomerase, found in Shigella boydii serotype 4 (strain Sb227).